A 394-amino-acid polypeptide reads, in one-letter code: Acetyl-CoA acetyltransferase (394 aa).

The active-site Acyl-thioester intermediate is C89. Catalysis depends on proton acceptor residues H350 and C380.

The protein belongs to the thiolase-like superfamily. Thiolase family. As to quaternary structure, homotetramer.

The protein resides in the cytoplasm. The catalysed reaction is 2 acetyl-CoA = acetoacetyl-CoA + CoA. It participates in biopolymer metabolism; poly-(R)-3-hydroxybutanoate biosynthesis. It functions in the pathway metabolic intermediate biosynthesis; (R)-mevalonate biosynthesis; (R)-mevalonate from acetyl-CoA: step 1/3. The protein is Acetyl-CoA acetyltransferase of Allochromatium vinosum (strain ATCC 17899 / DSM 180 / NBRC 103801 / NCIMB 10441 / D) (Chromatium vinosum).